A 329-amino-acid chain; its full sequence is Bifunctional nuclease 2 (329 aa).

The BFN domain occupies 121–256; that stretch reads CVHNNPQGGN…YLAYSDGMRV (136 aa). In terms of domain architecture, UVR spans 287–322; sequence DTKEFDLVRNMMQAVDEERYDEAAEWRDKLGKFQAK.

Belongs to the bifunctional nuclease family.

It localises to the nucleus. Its function is as follows. Bifunctional nuclease with both RNase and DNase activities. Involved in basal defense response. Participates in abscisic acid-derived callose deposition following infection by a necrotrophic pathogen. This chain is Bifunctional nuclease 2 (BBD2), found in Arabidopsis thaliana (Mouse-ear cress).